The primary structure comprises 728 residues: Microtubule-associated protein VP5 (728 aa).

Belongs to the reoviridae microtubule-associated protein family.

It is found in the virion. Its subcellular location is the host cytoplasm. The protein resides in the host cytoskeleton. Minor inner capsid component. Displays NTPase and RNA 5'-triphosphatase (RTPase) activities. May function as a cofactor of polymerase. Associates with microtubules and plays a role in the formation, structural organization and morphology of viral inclusions, where the assembly of cores and the replication of viral RNA occur. The sequence is that of Microtubule-associated protein VP5 (S5) from Ctenopharyngodon idella (Grass carp).